The following is a 313-amino-acid chain: NADH-ubiquinone oxidoreductase chain 2 (313 aa).

10 helical membrane passes run 3–23, 47–67, 81–101, 105–125, 128–148, 153–173, 177–197, 220–240, 253–275, and 293–313; these read IWIITISILVSLSSNSWFIFW, SMITYFIIQSFSSSLFFISSF, INISVLIKLGMIPFHFWLIMI, LTFYSLLILLTIQKIIPLLII, FMNSLMIPLFIMSSLLASIMA, LIKQILIFSSISHQGWILCLI, MNFWVSYLMLYSIIIYSIIIN, NTMIMSMMSLAGMPPFIGFFM, LIFMMILIISSLINLFFYLRILT, and KSNFMIKINMLLLIILINIFF.

Belongs to the complex I subunit 2 family.

The protein resides in the mitochondrion inner membrane. The enzyme catalyses a ubiquinone + NADH + 5 H(+)(in) = a ubiquinol + NAD(+) + 4 H(+)(out). In terms of biological role, core subunit of the mitochondrial membrane respiratory chain NADH dehydrogenase (Complex I) that is believed to belong to the minimal assembly required for catalysis. Complex I functions in the transfer of electrons from NADH to the respiratory chain. The immediate electron acceptor for the enzyme is believed to be ubiquinone. The chain is NADH-ubiquinone oxidoreductase chain 2 (ND2) from Rhipicephalus sanguineus (Brown dog tick).